A 269-amino-acid polypeptide reads, in one-letter code: Shikimate dehydrogenase (NADP(+)) (269 aa).

Shikimate is bound by residues 14-16 and threonine 61; that span reads SVS. Catalysis depends on lysine 65, which acts as the Proton acceptor. Asparagine 85 and aspartate 98 together coordinate shikimate. NADP(+) is bound by residues 120 to 124, 143 to 148, and threonine 211; these read GAGGA and NRTEEK. Tyrosine 213 contacts shikimate. Glycine 234 lines the NADP(+) pocket.

This sequence belongs to the shikimate dehydrogenase family. As to quaternary structure, homodimer.

It carries out the reaction shikimate + NADP(+) = 3-dehydroshikimate + NADPH + H(+). It functions in the pathway metabolic intermediate biosynthesis; chorismate biosynthesis; chorismate from D-erythrose 4-phosphate and phosphoenolpyruvate: step 4/7. In terms of biological role, involved in the biosynthesis of the chorismate, which leads to the biosynthesis of aromatic amino acids. Catalyzes the reversible NADPH linked reduction of 3-dehydroshikimate (DHSA) to yield shikimate (SA). This chain is Shikimate dehydrogenase (NADP(+)), found in Archaeoglobus fulgidus (strain ATCC 49558 / DSM 4304 / JCM 9628 / NBRC 100126 / VC-16).